Reading from the N-terminus, the 261-residue chain is Carnitinyl-CoA dehydratase (261 aa).

E111 serves as the catalytic Nucleophile. The Proton acceptor role is filled by E131.

The protein belongs to the enoyl-CoA hydratase/isomerase family.

It carries out the reaction (R)-carnitinyl-CoA = crotonobetainyl-CoA + H2O. It functions in the pathway amine and polyamine metabolism; carnitine metabolism. Functionally, catalyzes the reversible dehydration of L-carnitinyl-CoA to crotonobetainyl-CoA. This chain is Carnitinyl-CoA dehydratase, found in Escherichia coli O6:K15:H31 (strain 536 / UPEC).